A 716-amino-acid polypeptide reads, in one-letter code: Phosphoribosylformylglycinamidine synthase subunit PurL (716 aa).

Residue histidine 34 is part of the active site. Tyrosine 37 contributes to the ATP binding site. Residue glutamate 78 participates in Mg(2+) binding. Residues 79 to 82 and arginine 101 each bind substrate; that span reads SHNH. Histidine 80 (proton acceptor) is an active-site residue. Position 102 (aspartate 102) interacts with Mg(2+). Position 226 (glutamine 226) interacts with substrate. Aspartate 254 is a Mg(2+) binding site. 298–300 contributes to the substrate binding site; it reads ESQ. Residues aspartate 474 and glycine 511 each coordinate ATP. Asparagine 512 contacts Mg(2+). Serine 514 contributes to the substrate binding site.

The protein belongs to the FGAMS family. As to quaternary structure, monomer. Part of the FGAM synthase complex composed of 1 PurL, 1 PurQ and 2 PurS subunits.

The protein localises to the cytoplasm. It catalyses the reaction N(2)-formyl-N(1)-(5-phospho-beta-D-ribosyl)glycinamide + L-glutamine + ATP + H2O = 2-formamido-N(1)-(5-O-phospho-beta-D-ribosyl)acetamidine + L-glutamate + ADP + phosphate + H(+). Its pathway is purine metabolism; IMP biosynthesis via de novo pathway; 5-amino-1-(5-phospho-D-ribosyl)imidazole from N(2)-formyl-N(1)-(5-phospho-D-ribosyl)glycinamide: step 1/2. Part of the phosphoribosylformylglycinamidine synthase complex involved in the purines biosynthetic pathway. Catalyzes the ATP-dependent conversion of formylglycinamide ribonucleotide (FGAR) and glutamine to yield formylglycinamidine ribonucleotide (FGAM) and glutamate. The FGAM synthase complex is composed of three subunits. PurQ produces an ammonia molecule by converting glutamine to glutamate. PurL transfers the ammonia molecule to FGAR to form FGAM in an ATP-dependent manner. PurS interacts with PurQ and PurL and is thought to assist in the transfer of the ammonia molecule from PurQ to PurL. The chain is Phosphoribosylformylglycinamidine synthase subunit PurL from Methanobrevibacter smithii (strain ATCC 35061 / DSM 861 / OCM 144 / PS).